The primary structure comprises 466 residues: Ribulose bisphosphate carboxylase large chain (466 aa).

Residue lysine 5 is modified to N6,N6,N6-trimethyllysine. 2 residues coordinate substrate: asparagine 114 and threonine 164. Residue lysine 166 is the Proton acceptor of the active site. A substrate-binding site is contributed by lysine 168. Mg(2+) contacts are provided by lysine 192, aspartate 194, and glutamate 195. Lysine 192 bears the N6-carboxylysine mark. The active-site Proton acceptor is histidine 285. Residues arginine 286, histidine 318, and serine 370 each coordinate substrate.

It belongs to the RuBisCO large chain family. Type I subfamily. As to quaternary structure, heterohexadecamer of 8 large chains and 8 small chains; disulfide-linked. The disulfide link is formed within the large subunit homodimers. It depends on Mg(2+) as a cofactor. Post-translationally, the disulfide bond which can form in the large chain dimeric partners within the hexadecamer appears to be associated with oxidative stress and protein turnover.

It localises to the plastid. The protein resides in the chloroplast. It carries out the reaction 2 (2R)-3-phosphoglycerate + 2 H(+) = D-ribulose 1,5-bisphosphate + CO2 + H2O. It catalyses the reaction D-ribulose 1,5-bisphosphate + O2 = 2-phosphoglycolate + (2R)-3-phosphoglycerate + 2 H(+). Its function is as follows. RuBisCO catalyzes two reactions: the carboxylation of D-ribulose 1,5-bisphosphate, the primary event in carbon dioxide fixation, as well as the oxidative fragmentation of the pentose substrate in the photorespiration process. Both reactions occur simultaneously and in competition at the same active site. The chain is Ribulose bisphosphate carboxylase large chain from Drosophyllum lusitanicum (Portuguese sundew).